The chain runs to 678 residues: NADPH--cytochrome P450 reductase (678 aa).

Over 1–21 (MADSNMDAGTTTSEMVAEEVS) the chain is Lumenal. The chain crosses the membrane as a helical span at residues 22 to 42 (LFSTTDVILFSLIVGVMTYWF). Topologically, residues 43–678 (LFRKKKEEVP…KGRYSLDVWS (636 aa)) are cytoplasmic. Phosphoserine is present on serine 63. The region spanning 80–224 (IIVFYGSQTG…DFITWREQFW (145 aa)) is the Flavodoxin-like domain. FMN is bound by residues 86–91 (SQTGTA), 138–141 (ATYG), 173–182 (LGNKTYEHFN), and aspartate 208. An FAD-binding FR-type domain is found at 279-521 (KNPFLAVVTT…YVRKSQFRLP (243 aa)). Arginine 298 is a binding site for NADP(+). FAD is bound by residues arginine 424, 454–457 (RYYS), 472–474 (CAV), tyrosine 478, and 488–491 (GVAT). NADP(+) is bound by residues threonine 535, 596-597 (SR), 602-606 (KVYVQ), and aspartate 639. Position 677 (tryptophan 677) interacts with FAD.

It belongs to the NADPH--cytochrome P450 reductase family. In the N-terminal section; belongs to the flavodoxin family. The protein in the C-terminal section; belongs to the flavoprotein pyridine nucleotide cytochrome reductase family. FAD serves as cofactor. FMN is required as a cofactor.

It localises to the endoplasmic reticulum membrane. The catalysed reaction is 2 oxidized [cytochrome P450] + NADPH = 2 reduced [cytochrome P450] + NADP(+) + H(+). Its function is as follows. This enzyme is required for electron transfer from NADP to cytochrome P450 in microsomes. It can also provide electron transfer to heme oxygenase and cytochrome B5. The polypeptide is NADPH--cytochrome P450 reductase (Bos taurus (Bovine)).